Reading from the N-terminus, the 309-residue chain is Probable cell division protein kinase ECU11_1290 (309 aa).

One can recognise a Protein kinase domain in the interval 4–288 (YENIKQVGEG…VISSHKNTYI (285 aa)). ATP is bound by residues 10-18 (VGEGAFGQV) and lysine 33. Residue aspartate 124 is the Proton acceptor of the active site.

The protein belongs to the protein kinase superfamily. CMGC Ser/Thr protein kinase family. CDC2/CDKX subfamily.

The protein localises to the nucleus. The catalysed reaction is L-seryl-[protein] + ATP = O-phospho-L-seryl-[protein] + ADP + H(+). It catalyses the reaction L-threonyl-[protein] + ATP = O-phospho-L-threonyl-[protein] + ADP + H(+). Functionally, may play a role in the control of the eukaryotic cell cycle. The chain is Probable cell division protein kinase ECU11_1290 from Encephalitozoon cuniculi (strain GB-M1) (Microsporidian parasite).